A 352-amino-acid polypeptide reads, in one-letter code: MLSLQAMAKMAVATNTYSKYHYPILKVFGLWWKNNTLNGPIKICNHCNNITVGEYPMCYNHGMSMDVALIRAVKDRNISLIQLFTEWGGNIDYGALCANTPSMQRLCESLGAKPPKGRMYMDTLIHLSDTLNDNDLIRGYEIFDDNSVLDYVNLVRLKIMLTLKARIPLMEQLDQIALKQLLQRYWYAMAVQHNLRIAIHYFDNHIPNIKPFSLRCALYFNDPFKIHDACRTVTMDPNEMMNIACQQDLNFQSIYYCYLLGADINQAMLMSLNYGNLSNMWFCIDLGANVFKEARALAGKKNRRVLQYILGLNIFKRELIPPCKDPDPSQIQILLKNYILKNVSTVFTYYCQ.

It belongs to the asfivirus MGF 360 family.

Plays a role in virus cell tropism, and may be required for efficient virus replication in macrophages. The sequence is that of Protein MGF 360-16R from Ornithodoros (relapsing fever ticks).